A 72-amino-acid polypeptide reads, in one-letter code: Large ribosomal subunit protein uL29 (72 aa).

The protein belongs to the universal ribosomal protein uL29 family.

This chain is Large ribosomal subunit protein uL29, found in Prochlorococcus marinus (strain MIT 9515).